The sequence spans 982 residues: Envelope glycoprotein gp160 (982 aa).

An N-terminal signal peptide occupies residues 1–106 (MASKESKPSR…CLMWEVRKGN (106 aa)). Over 107–831 (QCQAEEVIAL…WSSWFSWLKY (725 aa)) the chain is Extracellular. N-linked (GlcNAc...) asparagine; by host glycans are attached at residues Asn140, Asn161, Asn206, Asn258, Asn298, Asn364, Asn381, Asn387, Asn403, Asn414, Asn435, Asn439, Asn470, Asn475, Asn481, Asn491, Asn501, Asn515, Asn527, Asn537, Asn542, Asn543, and Asn568. The fusion peptide stretch occupies residues 657–677 (GIGLVIVLAIMAIIAAAGAGL). A coiled-coil region spans residues 689–738 (RTAVQSLANATAAQQEVLEASYAMVQHIAKGIRILEARVARVEALVDMMV). Asn697 carries an N-linked (GlcNAc...) asparagine; by host glycan. An immunosuppression region spans residues 723-738 (LEARVARVEALVDMMV). 4 N-linked (GlcNAc...) asparagine; by host glycosylation sites follow: Asn764, Asn771, Asn787, and Asn821. Residues 779 to 814 (EEIEQHEGNLSLLLREAALQVHIAQRDARRIPDAWK) adopt a coiled-coil conformation. A helical transmembrane segment spans residues 832 to 852 (IPWIIMGIVGLMCFRILMCVI). Residues 853-982 (SMCLQAYKQV…PTLENDYVEL (130 aa)) lie on the Cytoplasmic side of the membrane. Residue Cys855 is the site of S-palmitoyl cysteine; by host attachment.

In terms of assembly, the mature envelope protein (Env) consists of a trimer of SU-TM heterodimers attached by noncovalent interactions or by a labile interchain disulfide bond. Specific enzymatic cleavages in vivo yield mature proteins. Envelope glycoproteins are synthesized as an inactive precursor that is N-glycosylated and processed likely by host cell furin or by a furin-like protease in the Golgi to yield the mature SU and TM proteins. The cleavage site between SU and TM requires the minimal sequence [KR]-X-[KR]-R. Post-translationally, the transmembrane protein is palmitoylated.

Its subcellular location is the virion membrane. The protein resides in the host cell membrane. The surface protein (SU) attaches the virus to the host cell by binding to its receptor. This interaction triggers the refolding of the transmembrane protein (TM) and is thought to activate its fusogenic potential by unmasking its fusion peptide. Fusion occurs at the host cell plasma membrane. Its function is as follows. The transmembrane protein (TM) acts as a class I viral fusion protein. Under the current model, the protein has at least 3 conformational states: pre-fusion native state, pre-hairpin intermediate state, and post-fusion hairpin state. During viral and target cell membrane fusion, the coiled coil regions (heptad repeats) assume a trimer-of-hairpins structure, positioning the fusion peptide in close proximity to the C-terminal region of the ectodomain. The formation of this structure appears to drive apposition and subsequent fusion of viral and target cell membranes. Membranes fusion leads to delivery of the nucleocapsid into the cytoplasm. This Maedi visna virus (strain 1514) (MVV) protein is Envelope glycoprotein gp160 (env).